The chain runs to 549 residues: Probable protein kinase UbiB (549 aa).

In terms of domain architecture, Protein kinase spans 123–501 (DFDDVPLASA…QHKAHKSNYL (379 aa)). ATP is bound by residues 129–137 (LASASIAQV) and Lys-152. Asp-287 functions as the Proton acceptor in the catalytic mechanism. 2 helical membrane-spanning segments follow: residues 498–517 (SNYL…ILFT) and 521–540 (TLWA…LLGW).

The protein belongs to the ABC1 family. UbiB subfamily.

It localises to the cell inner membrane. The protein operates within cofactor biosynthesis; ubiquinone biosynthesis [regulation]. In terms of biological role, is probably a protein kinase regulator of UbiI activity which is involved in aerobic coenzyme Q (ubiquinone) biosynthesis. The chain is Probable protein kinase UbiB from Shewanella denitrificans (strain OS217 / ATCC BAA-1090 / DSM 15013).